A 417-amino-acid chain; its full sequence is MLEQMGIAAKQASYKLAQLSSREKNRVLEKIADELEAQSEIILNANAQDVADARANGLSEAMLDRLALTPARLKGIADDVRQVCNLADPVGQVIDGGVLDSGLRLERRRVPLGVIGVIYEARPNVTVDVASLCLKTGNAVILRGGKETCRTNAATVAVIQDALKSCGLPAGAVQAIDNPDRALVSEMLRMDKYIDMLIPRGGAGLHKLCREQSTIPVITGGIGVCHIYVDESAEIAEALKVIVNAKTQRPSTCNTVETLLVNKNIADSFLPALSKQMAESGVTLHADAAALTQLQAGPAKVVAVKAEEYDDEFLSLDLNVKIVSDLDDAIAHIREHGTQHSDAILTRDMRNAQRFVNEVDSSAVYVNASTRFTDGGQFGLGAEVAVSTQKLHARGPMGLEALTTYKWIGIGDYTIRA.

Belongs to the gamma-glutamyl phosphate reductase family.

The protein localises to the cytoplasm. It catalyses the reaction L-glutamate 5-semialdehyde + phosphate + NADP(+) = L-glutamyl 5-phosphate + NADPH + H(+). It participates in amino-acid biosynthesis; L-proline biosynthesis; L-glutamate 5-semialdehyde from L-glutamate: step 2/2. Functionally, catalyzes the NADPH-dependent reduction of L-glutamate 5-phosphate into L-glutamate 5-semialdehyde and phosphate. The product spontaneously undergoes cyclization to form 1-pyrroline-5-carboxylate. The sequence is that of Gamma-glutamyl phosphate reductase from Shigella flexneri serotype 5b (strain 8401).